The chain runs to 443 residues: ATP-dependent protease ATPase subunit HslU (443 aa).

Residues Ile-18, 60–65, Asp-256, Glu-321, and Arg-393 each bind ATP; that span reads GVGKTE.

It belongs to the ClpX chaperone family. HslU subfamily. A double ring-shaped homohexamer of HslV is capped on each side by a ring-shaped HslU homohexamer. The assembly of the HslU/HslV complex is dependent on binding of ATP.

Its subcellular location is the cytoplasm. Functionally, ATPase subunit of a proteasome-like degradation complex; this subunit has chaperone activity. The binding of ATP and its subsequent hydrolysis by HslU are essential for unfolding of protein substrates subsequently hydrolyzed by HslV. HslU recognizes the N-terminal part of its protein substrates and unfolds these before they are guided to HslV for hydrolysis. The sequence is that of ATP-dependent protease ATPase subunit HslU from Enterobacter sp. (strain 638).